We begin with the raw amino-acid sequence, 101 residues long: Small ribosomal subunit protein uS14 (101 aa).

It belongs to the universal ribosomal protein uS14 family. Part of the 30S ribosomal subunit. Contacts proteins S3 and S10.

In terms of biological role, binds 16S rRNA, required for the assembly of 30S particles and may also be responsible for determining the conformation of the 16S rRNA at the A site. The chain is Small ribosomal subunit protein uS14 from Dechloromonas aromatica (strain RCB).